Here is a 484-residue protein sequence, read N- to C-terminus: Proline--tRNA ligase (484 aa).

Belongs to the class-II aminoacyl-tRNA synthetase family. ProS type 3 subfamily. In terms of assembly, homodimer.

The protein resides in the cytoplasm. It carries out the reaction tRNA(Pro) + L-proline + ATP = L-prolyl-tRNA(Pro) + AMP + diphosphate. Catalyzes the attachment of proline to tRNA(Pro) in a two-step reaction: proline is first activated by ATP to form Pro-AMP and then transferred to the acceptor end of tRNA(Pro). In Haloarcula marismortui (strain ATCC 43049 / DSM 3752 / JCM 8966 / VKM B-1809) (Halobacterium marismortui), this protein is Proline--tRNA ligase.